We begin with the raw amino-acid sequence, 494 residues long: Cytochrome P450 2C23 (494 aa).

Serine 131 is modified (phosphoserine). An N6-acetyllysine mark is found at lysine 253 and lysine 379. A heme-binding site is contributed by cysteine 439.

It belongs to the cytochrome P450 family. Requires heme as cofactor. In terms of tissue distribution, expressed in kidney and liver. Expressed in cortical tubules of kidney (at protein level).

Its subcellular location is the endoplasmic reticulum membrane. It localises to the microsome membrane. It carries out the reaction (5Z,8Z,11Z,14Z)-eicosatetraenoate + reduced [NADPH--hemoprotein reductase] + O2 = (8R,9S)-epoxy-(5Z,11Z,14Z)-eicosatrienoate + oxidized [NADPH--hemoprotein reductase] + H2O + H(+). It catalyses the reaction (5Z,8Z,11Z,14Z)-eicosatetraenoate + reduced [NADPH--hemoprotein reductase] + O2 = (11R,12S)-epoxy-(5Z,8Z,14Z)-eicosatrienoate + oxidized [NADPH--hemoprotein reductase] + H2O + H(+). The catalysed reaction is (5Z,8Z,11Z,14Z)-eicosatetraenoate + reduced [NADPH--hemoprotein reductase] + O2 = (11S,12R)-epoxy-(5Z,8Z,14Z)-eicosatrienoate + oxidized [NADPH--hemoprotein reductase] + H2O + H(+). The enzyme catalyses (5Z,8Z,11Z,14Z)-eicosatetraenoate + reduced [NADPH--hemoprotein reductase] + O2 = (14R,15S)-epoxy-(5Z,8Z,11Z)-eicosatrienoate + oxidized [NADPH--hemoprotein reductase] + H2O + H(+). It carries out the reaction (5Z,8Z,11Z,14Z)-eicosatetraenoate + reduced [NADPH--hemoprotein reductase] + O2 = (14S,15R)-epoxy-(5Z,8Z,11Z)-eicosatrienoate + oxidized [NADPH--hemoprotein reductase] + H2O + H(+). It catalyses the reaction (5Z,8Z,11Z,14Z,17Z)-eicosapentaenoate + reduced [NADPH--hemoprotein reductase] + O2 = 8,9-epoxy-(5Z,11Z,14Z,17Z)-eicosatetraenoate + oxidized [NADPH--hemoprotein reductase] + H2O + H(+). The catalysed reaction is (5Z,8Z,11Z,14Z,17Z)-eicosapentaenoate + reduced [NADPH--hemoprotein reductase] + O2 = 11,12-epoxy-(5Z,8Z,14Z,17Z)-eicosatetraenoate + oxidized [NADPH--hemoprotein reductase] + H2O + H(+). The enzyme catalyses (5Z,8Z,11Z,14Z,17Z)-eicosapentaenoate + reduced [NADPH--hemoprotein reductase] + O2 = 14,15-epoxy-(5Z,8Z,11Z,17Z)-eicosatetraenoate + oxidized [NADPH--hemoprotein reductase] + H2O + H(+). It carries out the reaction (5Z,8Z,11Z,14Z,17Z)-eicosapentaenoate + reduced [NADPH--hemoprotein reductase] + O2 = (17R,18S)-epoxy-(5Z,8Z,11Z,14Z)-eicosatetraenoate + oxidized [NADPH--hemoprotein reductase] + H2O + H(+). It catalyses the reaction (5Z,8Z,11Z,14Z,17Z)-eicosapentaenoate + reduced [NADPH--hemoprotein reductase] + O2 = (17S,18R)-epoxy-(5Z,8Z,11Z,14Z)-eicosatetraenoate + oxidized [NADPH--hemoprotein reductase] + H2O + H(+). The catalysed reaction is 20-hydroxy-(5Z,8Z,11Z,14Z)-eicosatetraenoate + reduced [NADPH--hemoprotein reductase] + O2 = 20-hydroxy-8,9-epoxy-(5Z,11Z,14Z)-eicosatrienoate + oxidized [NADPH--hemoprotein reductase] + H2O + H(+). Its pathway is lipid metabolism; arachidonate metabolism. Its function is as follows. A cytochrome P450 monooxygenase involved in polyunsaturated fatty acids (PUFAs) metabolism and signaling. Catalyzes preferentially the epoxidation of double bonds of PUFAs. Converts arachidonic acid (ARA, C20:4(n-6)) primarily to stereospecific products 8R,9S-, 11R,12S-, and 14S,15R-EET. Plays a major role in the formation of EETs and hydroxy-EETs (HEETs) in kidney. Via EETs may inhibit the epithelial sodium channels (ENaCs) in nephron segments, preventing excessive sodium absorption during high dietary salt intake. Participates in the formation of anti-inflammatory hydroxyepoxyeicosatrienoic acids (HEETs) by converting 20-hydroxyeicosatetraenoic acid (20-HETE) to 20,8,9-HEET, an activator of PPARA. Metabolizes eicosapentaenoic acid (EPA, C20:5(n-3)) to epoxyeicosatetraenoic acid (EETeTr) regioisomers, 8,9-, 11,12-, 14,15-, and 17,18-EETeTr, preferentially producing 17R,18S enantiomer. Mechanistically, uses molecular oxygen inserting one oxygen atom into a substrate, and reducing the second into a water molecule, with two electrons provided by NADPH via cytochrome P450 reductase (NADPH--hemoprotein reductase). This Rattus norvegicus (Rat) protein is Cytochrome P450 2C23.